Here is a 500-residue protein sequence, read N- to C-terminus: 5-taurinomethyluridine-[tRNA] synthase subunit GTPB3, mitochondrial (500 aa).

Residues 1 to 73 (MHFISCCLRR…RRLTRSLPAP (73 aa)) constitute a mitochondrion transit peptide. R53, E111, and K151 together coordinate 5,10-methylenetetrahydrofolate. Residues 248–422 (GVHVVIAGST…LLTLLHNTLK (175 aa)) form the TrmE-type G domain. GTP contacts are provided by residues 255-262 (GSTNAGKS), 281-285 (GTTRD), 302-305 (DTAG), and 373-376 (NESD). A K(+)-binding site is contributed by N258. Residues S262 and T283 each contribute to the Mg(2+) site. Position 500 (K500) interacts with 5,10-methylenetetrahydrofolate.

It belongs to the TRAFAC class TrmE-Era-EngA-EngB-Septin-like GTPase superfamily. TrmE GTPase family. Requires K(+) as cofactor.

Its subcellular location is the mitochondrion. The enzyme catalyses GTP + H2O = GDP + phosphate + H(+). Its function is as follows. GTPase component of the GTPBP3-MTO1 complex that catalyzes the 5-taurinomethyluridine (taum(5)U) modification at the 34th wobble position (U34) of mitochondrial tRNAs (mt-tRNAs), which plays a role in mt-tRNA decoding and mitochondrial translation. Taum(5)U formation on mammalian mt-tRNA requires the presence of both GTPBP3-mediated GTPase activity and MTO1 catalytic activity. In Danio rerio (Zebrafish), this protein is 5-taurinomethyluridine-[tRNA] synthase subunit GTPB3, mitochondrial (gtpbp3).